A 264-amino-acid chain; its full sequence is Ribonuclease H (264 aa).

Positions Gly-55–His-88 are disordered. Residues Ser-56–Ser-85 show a composition bias toward low complexity. Ser-97 carries the phosphoserine modification. The RNase H type-1 domain maps to Cys-120–Ser-263. Positions 129, 171, 191, and 255 each coordinate Mg(2+).

The protein belongs to the RNase H family. Mg(2+) is required as a cofactor.

The catalysed reaction is Endonucleolytic cleavage to 5'-phosphomonoester.. Functionally, endonuclease that specifically degrades the RNA of RNA-DNA hybrids. The protein is Ribonuclease H (rnh1) of Schizosaccharomyces pombe (strain 972 / ATCC 24843) (Fission yeast).